A 398-amino-acid chain; its full sequence is Probable peptidoglycan glycosyltransferase FtsW (398 aa).

At 1 to 20 (MSTQAIRGARGLVLKWGAGR) the chain is on the cytoplasmic side. The helical transmembrane segment at 21–41 (FYLDTVLLSVSLGLMLFGFVM) threads the bilayer. Topologically, residues 42–57 (VSSASLHLGEKMASDS) are periplasmic. Residues 58 to 78 (FYFPKHQLVHILLGLAAGWGA) traverse the membrane as a helical segment. Topologically, residues 79 to 92 (ARVRLDTLERHSRS) are cytoplasmic. A helical transmembrane segment spans residues 93–113 (LFWAGIALLVLVLIPGVGKSV). The Periplasmic portion of the chain corresponds to 114-121 (NGSVRWIN). The helical transmembrane segment at 122–142 (LFGLRVQVSEVFKLVAAIYVA) threads the bilayer. Topologically, residues 143-153 (GYISRHLDTVR) are cytoplasmic. Residues 154–174 (TSVKGMIFPLSLLAIGAVLLL) traverse the membrane as a helical segment. At 175 to 177 (KEP) the chain is on the periplasmic side. A helical membrane pass occupies residues 178 to 198 (DFGATAVVMATALGMLFLAGA). A topological domain (cytoplasmic) is located at residue arginine 199. The helical transmembrane segment at 200 to 220 (LWVFVGLLGLVAVAGTVLIYT) threads the bilayer. Topologically, residues 221–289 (AEYRLRRVLS…LFSVIGEELG (69 aa)) are periplasmic. A helical transmembrane segment spans residues 290–310 (LWGATTVILLFAIVVWRALAI). The Cytoplasmic segment spans residues 311–318 (GRLAERSG). The helical transmembrane segment at 319-339 (NLFAAFLAYGIGIWLGLQSFI) threads the bilayer. Residues 340–355 (NMGVNMGMLPTKGLTL) lie on the Periplasmic side of the membrane. A helical membrane pass occupies residues 356–376 (PLMSYGGGSMMVVCAAIGLLF). Residues 377–398 (RIRSEAVASFLGNGRKGLWPGV) lie on the Cytoplasmic side of the membrane.

This sequence belongs to the SEDS family. FtsW subfamily.

The protein localises to the cell inner membrane. It catalyses the reaction [GlcNAc-(1-&gt;4)-Mur2Ac(oyl-L-Ala-gamma-D-Glu-L-Lys-D-Ala-D-Ala)](n)-di-trans,octa-cis-undecaprenyl diphosphate + beta-D-GlcNAc-(1-&gt;4)-Mur2Ac(oyl-L-Ala-gamma-D-Glu-L-Lys-D-Ala-D-Ala)-di-trans,octa-cis-undecaprenyl diphosphate = [GlcNAc-(1-&gt;4)-Mur2Ac(oyl-L-Ala-gamma-D-Glu-L-Lys-D-Ala-D-Ala)](n+1)-di-trans,octa-cis-undecaprenyl diphosphate + di-trans,octa-cis-undecaprenyl diphosphate + H(+). Its pathway is cell wall biogenesis; peptidoglycan biosynthesis. Peptidoglycan polymerase that is essential for cell division. The protein is Probable peptidoglycan glycosyltransferase FtsW of Methylococcus capsulatus (strain ATCC 33009 / NCIMB 11132 / Bath).